The primary structure comprises 185 residues: MDSLQNHLLIAMPSLKDTFFERSVIYLCEHNEQGAMGLMINRPIGVDVNELLRQMELDDFHTIESINSKVLVGGPVGQEKGFVLHTPQPQWSNSQQISDDLMLTTSRDVLTSLGSKEAPEQFIVALGYAGWGRHQLEQELADNTWLSIPANIDLMFNTDHESRWQKATESLGFDIWQLSSQAGHA.

This sequence belongs to the UPF0301 (AlgH) family.

This Shewanella loihica (strain ATCC BAA-1088 / PV-4) protein is UPF0301 protein Shew_1144.